The following is a 65-amino-acid chain: Large ribosomal subunit protein bL33 (65 aa).

The interval 17–40 (SRSVPSSEKRSAGVSRYTTEKNRR) is disordered.

It belongs to the bacterial ribosomal protein bL33 family.

This chain is Large ribosomal subunit protein bL33, found in Prochlorococcus marinus (strain NATL1A).